A 375-amino-acid polypeptide reads, in one-letter code: MAKRDYYEILGVSKSATPEEIKAAFRKLAKEHHPDRNKSADDTLFKEINEAYEVLSDSKKRAQYDQFGHDGPQGFSSASGFSGFSGGFGGVDFDINDIFGSFFNNASSSHNSSNQYETYDIHLRLHLDFMEAVNGISKNINYDRKITCHKCQGTGAKDPKDVKICTKCHGRGTSIENVHSLFGTIQQEVECHECEGTGKVASSKCEQCYGKKVINERVNLTVEIPAGTREGEKLLVSKKGNIVNNQEFDLYLHISVKPSKYFALDGLDIYSETYIDPIKAIVGGIIEVVTINGIKTIEIPSNTPEGKKFRISGSGIVNKKSNIFGKKNGDFYTTIRYAKPVELSKDEIAYLKNISTRTNQNVEYYKNKVLKEISK.

Positions 5–68 constitute a J domain; sequence DYYEILGVSK…KKRAQYDQFG (64 aa). The CR-type zinc finger occupies 135–217; the sequence is GISKNINYDR…CYGKKVINER (83 aa). Positions 148, 151, 165, 168, 191, 194, 205, and 208 each coordinate Zn(2+). CXXCXGXG motif repeat units follow at residues 148-155, 165-172, 191-198, and 205-212; these read CHKCQGTG, CTKCHGRG, CHECEGTG, and CEQCYGKK.

Belongs to the DnaJ family. In terms of assembly, homodimer. The cofactor is Zn(2+).

It is found in the cytoplasm. Its function is as follows. Participates actively in the response to hyperosmotic and heat shock by preventing the aggregation of stress-denatured proteins and by disaggregating proteins, also in an autonomous, DnaK-independent fashion. Unfolded proteins bind initially to DnaJ; upon interaction with the DnaJ-bound protein, DnaK hydrolyzes its bound ATP, resulting in the formation of a stable complex. GrpE releases ADP from DnaK; ATP binding to DnaK triggers the release of the substrate protein, thus completing the reaction cycle. Several rounds of ATP-dependent interactions between DnaJ, DnaK and GrpE are required for fully efficient folding. Also involved, together with DnaK and GrpE, in the DNA replication of plasmids through activation of initiation proteins. The sequence is that of Chaperone protein DnaJ from Ureaplasma parvum serovar 3 (strain ATCC 700970).